The primary structure comprises 374 residues: Wnt inhibitory factor 1 (374 aa).

An N-terminal signal peptide occupies residues 1–28 (MSLTGYFAAPLCSIFLFILAHADAGQQE). The WIF domain maps to 33–172 (MWIDAHQARV…PQNAIFFKTC (140 aa)). Asn83 carries N-linked (GlcNAc...) asparagine glycosylation. 7 disulfide bridges follow: Cys135-Cys172, Cys177-Cys187, Cys181-Cys193, Cys195-Cys204, Cys209-Cys219, Cys213-Cys225, and Cys227-Cys236. EGF-like domains lie at 173–205 (QQAKCTGGCRNGGFCNDRHVCECPDGFYGPHCE), 208–237 (LCMPRCMNGGLCVTPGLCICPPGYYGINCD), 237–269 (DKVNCTTHCLNGGTCFYPGKCICPSGYEGEQCE), 270–301 (TSKCQQPCRNGGKCSGKNKCKCSKGYQGDLCS), and 302–333 (KPVCEPSCGAHGTCIEPNKCQCKEGWNGRYCN). Asn240 carries an N-linked (GlcNAc...) asparagine glycan. Intrachain disulfides connect Cys241–Cys251, Cys245–Cys257, Cys259–Cys268, Cys273–Cys283, Cys277–Cys289, Cys291–Cys300, Cys305–Cys315, Cys309–Cys321, and Cys323–Cys332. The interval 343-374 (ALRPTGSRNRQHTPSPKRTEDRQALPESNYIW) is disordered. Polar residues predominate over residues 348–358 (GSRNRQHTPSP).

As to expression, during somatogenesis, expressed predominantly in unsegmented paraxial presomitic mesoderm and, to a much lesser extent, in newly segmented somites.

It localises to the secreted. Its function is as follows. Binds to WNT proteins and inhibits their activities. May be involved in mesoderm segmentation. This chain is Wnt inhibitory factor 1 (wif1), found in Xenopus laevis (African clawed frog).